The primary structure comprises 29 residues: Kalata-B11 (29 aa).

The segment at residues 1–29 (GLPVCGETCFGGTCNTPGCSCTDPICTRD) is a cross-link (cyclopeptide (Gly-Asp)). 3 disulfide bridges follow: Cys-5–Cys-19, Cys-9–Cys-21, and Cys-14–Cys-26.

This is a cyclic peptide.

Probably participates in a plant defense mechanism. The protein is Kalata-B11 of Oldenlandia affinis.